The following is a 158-amino-acid chain: MGHFTFIGLCLLAMFLSLSGAECYTCPIDWLPKNGLCYKVFSNPKSWLDAEMFCRKFKPGCHLASIHRDADSADLAEYVSDYLKDDGNVWIGLNDPQKKRTWVWSDRSSSNYFSWNQGEPNNSKNKEYCVHLWAPTGYLKWNDAPCETLHPFICQCKY.

The signal sequence occupies residues Met1–Ala21. 4 disulfides stabilise this stretch: Cys26–Cys37, Cys54–Cys154, Cys61–Cys156, and Cys129–Cys146. One can recognise a C-type lectin domain in the interval Lys33–Gln155. Residues Glu119–Asn121 carry the Mannose-binding motif. A glycan (N-linked (GlcNAc...) asparagine) is linked at Asn121. 3 residues coordinate Ca(2+): Glu127, Asn142, and Asp143.

This sequence belongs to the true venom lectin family. As to quaternary structure, homodimer; non-covalently linked. Expressed by the venom gland.

Its subcellular location is the secreted. In terms of biological role, mannose-binding lectin which recognizes specific carbohydrate structures and agglutinates a variety of animal cells by binding to cell-surface glycoproteins and glycolipids. May be a calcium-dependent lectin. This Bungarus fasciatus (Banded krait) protein is C-type lectin BfL-2.